Reading from the N-terminus, the 475-residue chain is L-seryl-tRNA(Sec) selenium transferase (475 aa).

Lys295 is subject to N6-(pyridoxal phosphate)lysine.

The protein belongs to the SelA family. Pyridoxal 5'-phosphate serves as cofactor.

The protein resides in the cytoplasm. The enzyme catalyses L-seryl-tRNA(Sec) + selenophosphate + H(+) = L-selenocysteinyl-tRNA(Sec) + phosphate. It functions in the pathway aminoacyl-tRNA biosynthesis; selenocysteinyl-tRNA(Sec) biosynthesis; selenocysteinyl-tRNA(Sec) from L-seryl-tRNA(Sec) (bacterial route): step 1/1. Functionally, converts seryl-tRNA(Sec) to selenocysteinyl-tRNA(Sec) required for selenoprotein biosynthesis. The sequence is that of L-seryl-tRNA(Sec) selenium transferase from Desulfovibrio desulfuricans (strain ATCC 27774 / DSM 6949 / MB).